Here is a 356-residue protein sequence, read N- to C-terminus: Phenylalanine--tRNA ligase alpha subunit (356 aa).

Glu-260 is a binding site for Mg(2+).

It belongs to the class-II aminoacyl-tRNA synthetase family. Phe-tRNA synthetase alpha subunit type 1 subfamily. In terms of assembly, tetramer of two alpha and two beta subunits. Requires Mg(2+) as cofactor.

The protein localises to the cytoplasm. It catalyses the reaction tRNA(Phe) + L-phenylalanine + ATP = L-phenylalanyl-tRNA(Phe) + AMP + diphosphate + H(+). The protein is Phenylalanine--tRNA ligase alpha subunit of Gluconacetobacter diazotrophicus (strain ATCC 49037 / DSM 5601 / CCUG 37298 / CIP 103539 / LMG 7603 / PAl5).